The sequence spans 617 residues: Dihydroxy-acid dehydratase (617 aa).

Residue Asp82 participates in Mg(2+) binding. Cys123 lines the [2Fe-2S] cluster pocket. Mg(2+)-binding residues include Asp124 and Lys125. N6-carboxylysine is present on Lys125. Residue Cys197 coordinates [2Fe-2S] cluster. Glu497 is a Mg(2+) binding site. Ser523 functions as the Proton acceptor in the catalytic mechanism.

This sequence belongs to the IlvD/Edd family. Homodimer. Requires [2Fe-2S] cluster as cofactor. It depends on Mg(2+) as a cofactor.

The enzyme catalyses (2R)-2,3-dihydroxy-3-methylbutanoate = 3-methyl-2-oxobutanoate + H2O. It carries out the reaction (2R,3R)-2,3-dihydroxy-3-methylpentanoate = (S)-3-methyl-2-oxopentanoate + H2O. The protein operates within amino-acid biosynthesis; L-isoleucine biosynthesis; L-isoleucine from 2-oxobutanoate: step 3/4. It participates in amino-acid biosynthesis; L-valine biosynthesis; L-valine from pyruvate: step 3/4. In terms of biological role, functions in the biosynthesis of branched-chain amino acids. Catalyzes the dehydration of (2R,3R)-2,3-dihydroxy-3-methylpentanoate (2,3-dihydroxy-3-methylvalerate) into 2-oxo-3-methylpentanoate (2-oxo-3-methylvalerate) and of (2R)-2,3-dihydroxy-3-methylbutanoate (2,3-dihydroxyisovalerate) into 2-oxo-3-methylbutanoate (2-oxoisovalerate), the penultimate precursor to L-isoleucine and L-valine, respectively. The chain is Dihydroxy-acid dehydratase from Streptomyces avermitilis (strain ATCC 31267 / DSM 46492 / JCM 5070 / NBRC 14893 / NCIMB 12804 / NRRL 8165 / MA-4680).